The primary structure comprises 193 residues: ATP-dependent Clp protease proteolytic subunit (193 aa).

The Nucleophile role is filled by Ser98. His123 is an active-site residue.

The protein belongs to the peptidase S14 family. As to quaternary structure, fourteen ClpP subunits assemble into 2 heptameric rings which stack back to back to give a disk-like structure with a central cavity, resembling the structure of eukaryotic proteasomes.

It localises to the cytoplasm. It catalyses the reaction Hydrolysis of proteins to small peptides in the presence of ATP and magnesium. alpha-casein is the usual test substrate. In the absence of ATP, only oligopeptides shorter than five residues are hydrolyzed (such as succinyl-Leu-Tyr-|-NHMec, and Leu-Tyr-Leu-|-Tyr-Trp, in which cleavage of the -Tyr-|-Leu- and -Tyr-|-Trp bonds also occurs).. In terms of biological role, cleaves peptides in various proteins in a process that requires ATP hydrolysis. Has a chymotrypsin-like activity. Plays a major role in the degradation of misfolded proteins. The chain is ATP-dependent Clp protease proteolytic subunit from Lachnospira eligens (strain ATCC 27750 / DSM 3376 / VPI C15-48 / C15-B4) (Eubacterium eligens).